Consider the following 196-residue polypeptide: Cysteine/O-acetylserine efflux protein (196 aa).

A helical membrane pass occupies residues 1-21 (MTPTLISAFLTYTLITALTPG). At 22 to 41 (PNNILALSSVTSHGLRRSLR) the chain is on the cytoplasmic side. The helical transmembrane segment at 42–62 (VLAGMSVGFIITMLICAALTF) threads the bilayer. Residues 63–70 (SLVELDSR) are Periplasmic-facing. The helical transmembrane segment at 71-91 (FTLVLGWIGAAYILWLAWQIA) threads the bilayer. At 92-114 (KSKPATGTPSVEPVGFWASLGLQ) the chain is on the cytoplasmic side. Residues 115-135 (FVNVKIILYGITALSTFVLPV) form a helical membrane-spanning segment. Over 136 to 139 (TREP) the chain is Periplasmic. The helical transmembrane segment at 140 to 160 (VWLISVSLLLAAIGALGNLCW) threads the bilayer. Topologically, residues 161-170 (ALAGHLFQRL) are cytoplasmic. A helical transmembrane segment spans residues 171–191 (FLLYGRQLNWMLAALLVYCAV). Over 192–196 (RIVVE) the chain is Periplasmic.

The protein belongs to the Rht family.

Its subcellular location is the cell inner membrane. It catalyses the reaction O-acetyl-L-serine(in) = O-acetyl-L-serine(out). The enzyme catalyses L-cysteine(in) = L-cysteine(out). Its function is as follows. Exporter of O-acetylserine (OAS) and cysteine. The polypeptide is Cysteine/O-acetylserine efflux protein (eamB) (Klebsiella pneumoniae subsp. pneumoniae (strain ATCC 700721 / MGH 78578)).